The following is a 212-amino-acid chain: Thymidylate kinase (212 aa).

10-17 (GLEGAGKT) contacts ATP.

The protein belongs to the thymidylate kinase family.

The enzyme catalyses dTMP + ATP = dTDP + ADP. Functionally, phosphorylation of dTMP to form dTDP in both de novo and salvage pathways of dTTP synthesis. The polypeptide is Thymidylate kinase (Yersinia pseudotuberculosis serotype O:3 (strain YPIII)).